Reading from the N-terminus, the 329-residue chain is GTP 3',8-cyclase (329 aa).

Residues alanine 8–alanine 234 enclose the Radical SAM core domain. Arginine 17 provides a ligand contact to GTP. [4Fe-4S] cluster is bound by residues cysteine 24 and cysteine 28. Tyrosine 30 is a binding site for S-adenosyl-L-methionine. Residue cysteine 31 participates in [4Fe-4S] cluster binding. Arginine 68 contributes to the GTP binding site. Glycine 72 provides a ligand contact to S-adenosyl-L-methionine. Threonine 99 is a binding site for GTP. Serine 123 is an S-adenosyl-L-methionine binding site. GTP is bound at residue lysine 160. Methionine 194 provides a ligand contact to S-adenosyl-L-methionine. Cysteine 257 and cysteine 260 together coordinate [4Fe-4S] cluster. Residue arginine 262–arginine 264 coordinates GTP. Position 274 (cysteine 274) interacts with [4Fe-4S] cluster.

The protein belongs to the radical SAM superfamily. MoaA family. As to quaternary structure, monomer and homodimer. [4Fe-4S] cluster is required as a cofactor.

The enzyme catalyses GTP + AH2 + S-adenosyl-L-methionine = (8S)-3',8-cyclo-7,8-dihydroguanosine 5'-triphosphate + 5'-deoxyadenosine + L-methionine + A + H(+). Its pathway is cofactor biosynthesis; molybdopterin biosynthesis. Its function is as follows. Catalyzes the cyclization of GTP to (8S)-3',8-cyclo-7,8-dihydroguanosine 5'-triphosphate. The chain is GTP 3',8-cyclase from Salmonella newport (strain SL254).